An 810-amino-acid chain; its full sequence is RING finger protein unkempt homolog (810 aa).

The segment at 1–24 (MSKGPGPGGSAASSAPPAATAQVL) is disordered. Residues 10-19 (SAASSAPPAA) are compositionally biased toward low complexity. C3H1-type zinc fingers lie at residues 84 to 113 (YSPDVYCTKYDEATGLCPEGDECPFLHRTT), 124 to 154 (YYKTGICIHETDSKGNCTKNGLHCAFAHGPH), 215 to 241 (NYKTEPCKKPPRLCRQGYACPYYHNSK), 251 to 285 (KYRSSPCPNVKHGDEWGDPGKCENGDACQYCHTRT), and 293 to 321 (IYKSTKCNDMQQSGSCPRGPFCAFAHVEQ). Positions 239-265 (NSKDRRRSPRKHKYRSSPCPNVKHGDE) are disordered. Serine 240 carries the phosphoserine modification. Residues 241-253 (KDRRRSPRKHKYR) are compositionally biased toward basic residues. The tract at residues 324–343 (LSDDLQPSSAVSSPTQPGPV) is disordered. The span at 328–338 (LQPSSAVSSPT) shows a compositional bias: polar residues. Phosphoserine is present on residues serine 374, serine 378, serine 385, and serine 631. A coiled-coil region spans residues 643–723 (GAAELARLRQ…QEELERLHAG (81 aa)). The segment at 766–801 (SVKCLKCQEQKRAVLPCQHAALCELCAEGSECPICQ) adopts an RING-type; degenerate zinc-finger fold.

The protein belongs to the unkempt family.

The protein localises to the cytoplasm. Its function is as follows. Sequence-specific RNA-binding protein which plays an important role in the establishment and maintenance of the early morphology of cortical neurons during embryonic development. Acts as a translation repressor and controls a translationally regulated cell morphology program to ensure proper structuring of the nervous system. Translational control depends on recognition of its binding element within target mRNAs which consists of a mandatory UAG trimer upstream of a U/A-rich motif. Associated with polysomes. The chain is RING finger protein unkempt homolog (UNK) from Homo sapiens (Human).